An 852-amino-acid polypeptide reads, in one-letter code: Phenylalanine--tRNA ligase beta subunit (852 aa).

A tRNA-binding domain is found at 44–159 (PETTGPLVIG…DADLASANLK (116 aa)). A B5 domain is found at 428 to 510 (PEMPMITIHT…RLEGLEDIPS (83 aa)). Mg(2+) is bound by residues Asp488, Asp494, Glu497, and Glu498. The 94-residue stretch at 758-851 (SAFPAVLQDI…ATEKVGAQLR (94 aa)) folds into the FDX-ACB domain.

This sequence belongs to the phenylalanyl-tRNA synthetase beta subunit family. Type 1 subfamily. As to quaternary structure, tetramer of two alpha and two beta subunits. Mg(2+) is required as a cofactor.

It is found in the cytoplasm. The enzyme catalyses tRNA(Phe) + L-phenylalanine + ATP = L-phenylalanyl-tRNA(Phe) + AMP + diphosphate + H(+). The chain is Phenylalanine--tRNA ligase beta subunit from Corynebacterium jeikeium (strain K411).